The sequence spans 214 residues: MFVLVNLKAYPCDPVAIAEAAADVAETTPATIAVAPQPADIGRVADTGATTYAQHVSPTEHGSHTGSVLAESVADNGAVGTLLNHSEHRRRLADIDGSVAAAERAGLDTVVCANNPAQVAAAAALGPDAVAVEPPALIGTGTPVSQADPDIVSDAVAAAEAVDPSVDVYCGAGITTGEDVVSAGDLGASGVLLASGVAKADDPRAALADLVAPL.

Residue N6–K8 coordinates substrate. H85 (electrophile) is an active-site residue. The active-site Proton acceptor is the E133. Substrate is bound by residues I138, G173, and A194–S195.

Belongs to the triosephosphate isomerase family. Homotetramer; dimer of dimers.

Its subcellular location is the cytoplasm. It carries out the reaction D-glyceraldehyde 3-phosphate = dihydroxyacetone phosphate. It functions in the pathway carbohydrate biosynthesis; gluconeogenesis. Its pathway is carbohydrate degradation; glycolysis; D-glyceraldehyde 3-phosphate from glycerone phosphate: step 1/1. Its function is as follows. Involved in the gluconeogenesis. Catalyzes stereospecifically the conversion of dihydroxyacetone phosphate (DHAP) to D-glyceraldehyde-3-phosphate (G3P). This Halobacterium salinarum (strain ATCC 700922 / JCM 11081 / NRC-1) (Halobacterium halobium) protein is Triosephosphate isomerase.